Consider the following 227-residue polypeptide: Enolase-phosphatase E1 (227 aa).

This sequence belongs to the HAD-like hydrolase superfamily. MasA/MtnC family. As to quaternary structure, monomer. Mg(2+) serves as cofactor.

It carries out the reaction 5-methylsulfanyl-2,3-dioxopentyl phosphate + H2O = 1,2-dihydroxy-5-(methylsulfanyl)pent-1-en-3-one + phosphate. The protein operates within amino-acid biosynthesis; L-methionine biosynthesis via salvage pathway; L-methionine from S-methyl-5-thio-alpha-D-ribose 1-phosphate: step 3/6. It functions in the pathway amino-acid biosynthesis; L-methionine biosynthesis via salvage pathway; L-methionine from S-methyl-5-thio-alpha-D-ribose 1-phosphate: step 4/6. Functionally, bifunctional enzyme that catalyzes the enolization of 2,3-diketo-5-methylthiopentyl-1-phosphate (DK-MTP-1-P) into the intermediate 2-hydroxy-3-keto-5-methylthiopentenyl-1-phosphate (HK-MTPenyl-1-P), which is then dephosphorylated to form the acireductone 1,2-dihydroxy-3-keto-5-methylthiopentene (DHK-MTPene). This Pseudomonas fluorescens (strain Pf0-1) protein is Enolase-phosphatase E1.